The chain runs to 622 residues: Mitochondrial Rho GTPase 2 (622 aa).

Residues 1–596 (MRRDVRILLL…ELHPTPFWLR (596 aa)) are Cytoplasmic-facing. Positions 2-168 (RRDVRILLLG…FYYAQKAVLH (167 aa)) constitute a Miro 1 domain. Residues glycine 16, lysine 17, threonine 18, and serine 19 each coordinate GTP. Residue threonine 18 coordinates Mg(2+). Mg(2+) is bound at residue aspartate 57. Residue serine 59 coordinates GTP. Lysine 96 is covalently cross-linked (Glycyl lysine isopeptide (Lys-Gly) (interchain with G-Cter in ubiquitin)). The GTP site is built by asparagine 118, lysine 119, aspartate 121, alanine 149, and lysine 150. A Glycyl lysine isopeptide (Lys-Gly) (interchain with G-Cter in ubiquitin) cross-link involves residue lysine 119. A Glycyl lysine isopeptide (Lys-Gly) (interchain with G-Cter in ubiquitin) cross-link involves residue lysine 164. 2 EF-hand domains span residues 184-219 (ACAQ…CFGH) and 304-339 (RGYQ…FSVA). Ca(2+) is bound by residues aspartate 197, aspartate 199, aspartate 201, glutamate 208, aspartate 317, aspartate 319, aspartate 321, and glutamate 328. A Miro 2 domain is found at 415 to 580 (RSVLMCKVLG…FTQLATMATF (166 aa)). Positions 427, 429, 430, 431, and 432 each coordinate GTP. Serine 431 contacts Mg(2+). Glutamate 475 lines the Mg(2+) pocket. 3 residues coordinate GTP: lysine 529, aspartate 531, and cysteine 560. A helical; Anchor for type IV membrane protein membrane pass occupies residues 597 to 619 (GVLVAVGTAVAAVLSFSLYRVLV). At 620 to 622 (KSR) the chain is on the mitochondrial intermembrane side.

Belongs to the mitochondrial Rho GTPase family. In terms of assembly, homodimer. Interacts with the kinesin-binding proteins TRAK1/OIP106 and TRAK2/GRIF1, forming a link between mitochondria and the trafficking apparatus of the microtubules. Interacts with ARMCX3. Found in a complex with KIF5B, OGT, RHOT1 and TRAK1. Ubiquitinated by PRKN in a PINK1-dependent manner, leading to its degradation.

It is found in the mitochondrion outer membrane. It carries out the reaction GTP + H2O = GDP + phosphate + H(+). The catalysed reaction is ATP + H2O = ADP + phosphate + H(+). The enzyme catalyses UTP + H2O = UDP + phosphate + H(+). In terms of biological role, atypical mitochondrial nucleoside-triphosphatase (NTPase) involved in mitochondrial trafficking. Probably involved in control of anterograde transport of mitochondria and their subcellular distribution. Can hydrolyze GTP, ATP and UTP. The chain is Mitochondrial Rho GTPase 2 (Rhot2) from Rattus norvegicus (Rat).